Reading from the N-terminus, the 366-residue chain is Methyltransferase calH (366 aa).

Residues Thr189, Asp216, and 245 to 246 each bind S-adenosyl-L-methionine; that span reads NA.

This sequence belongs to the class I-like SAM-binding methyltransferase superfamily.

It participates in secondary metabolite biosynthesis. Functionally, methyltransferase; part of the gene cluster that mediates the biosynthesis of calbistrin A and related compounds. Calbistrin A is a secondary metabolite with an interesting structure that was recently found to have bioactivity against leukemia cells. It consists of two polyketides linked by an ester bond: a bicyclic decalin containing polyketide and a linear 12 carbon dioic acid structure. The polyketide synthase calA is probably responsible for forming the decalin moiety. Because calA lacks a designated enoylreductase (ER) domain, the required activity is provided by the trans-enoyl reductase calK. Following release from the PKS, calF then probably catalyzes the oxidation and the subsequent Diels Alder cycloisomerization that lead to the formation of the decalin moiety. The decalin polyketide backbone includes two C-methyl groups, at C7 and C11 in backbone, of which the C7 position is probably methylated by the methyltransferase domain of calA. A candidate for adding the methyl group at C11, if not done by CalA, is the cluster methyltransferase calH. Several additional tailoring enzymes within the cluster could be involved in the modification of the decalin polyketide product. Those include the 3 cytochrome P450 monooxygenases CalE, CalG and CalL, of which one might be responsible for the introduction of the extra hydroxyl group attached to the backbone of the decalin moiety, at position C9 in the backbone, that allows for attachment of the linear moiety. One tailoring enzyme activity that is expected to be involved in biosynthesis of calbistrin is an acyltransferase for connecting the two polyketide synthase products, and which could be performed by the cluster acyltransferase calJ. The enzyme responsible for the biosynthesis of the linear moiety, probably a second PKS, has not been identified yet. In Penicillium decumbens, this protein is Methyltransferase calH.